A 480-amino-acid chain; its full sequence is Cytochrome c oxidase subunit 1 (480 aa).

A helical membrane pass occupies residues 22–42 (ISYLWLAYWFGMIGFYMSVLI). Residues E45 and G50 each coordinate Ca(2+). Helical transmembrane passes span 64–84 (LLFT…GLFG), 109–129 (SLLL…LEIG), 151–171 (LIIF…INFI), 194–214 (IVLT…VFLM), 240–260 (LFWF…FGII), 278–298 (MILA…HHMY), 309–329 (YFTT…FNWV), and 343–363 (LILF…TGVV). H69 contributes to the Fe(II)-heme a binding site. Position 246 (H246) interacts with Cu cation. Positions 246–250 (HPEVY) form a cross-link, 1'-histidyl-3'-tyrosine (His-Tyr). Y250 is a binding site for O2. H295 and H296 together coordinate Cu cation. Residues H374 and D375 each coordinate Mg(2+). H382 lines the heme a3 pocket. The next 2 membrane-spanning stretches (helical) occupy residues 382 to 402 (HFHF…IVYI) and 416 to 436 (LSLM…PMHF). H384 contacts Fe(II)-heme a. P447 contacts Ca(2+). Residues 458-478 (FICTLGATMMLVLKLTVLFII) form a helical membrane-spanning segment.

Belongs to the heme-copper respiratory oxidase family. Component of the cytochrome c oxidase (complex IV, CIV), a multisubunit enzyme composed of a catalytic core of 3 subunits and several supernumerary subunits. The complex exists as a monomer or a dimer and forms supercomplexes (SCs) in the inner mitochondrial membrane with ubiquinol-cytochrome c oxidoreductase (cytochrome b-c1 complex, complex III, CIII). Heme is required as a cofactor. Requires Cu cation as cofactor.

The protein resides in the mitochondrion inner membrane. The catalysed reaction is 4 Fe(II)-[cytochrome c] + O2 + 8 H(+)(in) = 4 Fe(III)-[cytochrome c] + 2 H2O + 4 H(+)(out). It participates in energy metabolism; oxidative phosphorylation. Functionally, component of the cytochrome c oxidase, the last enzyme in the mitochondrial electron transport chain which drives oxidative phosphorylation. The respiratory chain contains 3 multisubunit complexes succinate dehydrogenase (complex II, CII), ubiquinol-cytochrome c oxidoreductase (cytochrome b-c1 complex, complex III, CIII) and cytochrome c oxidase (complex IV, CIV), that cooperate to transfer electrons derived from NADH and succinate to molecular oxygen, creating an electrochemical gradient over the inner membrane that drives transmembrane transport and the ATP synthase. Cytochrome c oxidase is the component of the respiratory chain that catalyzes the reduction of oxygen to water. Electrons originating from reduced cytochrome c in the intermembrane space (IMS) are transferred via the dinuclear copper A center (CU(A)) of subunit 2 and heme A of subunit 1 to the active site in subunit 1, a binuclear center (BNC) formed by heme A3 and copper B (CU(B)). The BNC reduces molecular oxygen to 2 water molecules using 4 electrons from cytochrome c in the IMS and 4 protons from the mitochondrial matrix. This chain is Cytochrome c oxidase subunit 1 (MT-CO1), found in Theileria annulata.